A 246-amino-acid polypeptide reads, in one-letter code: 1-(5-phosphoribosyl)-5-[(5-phosphoribosylamino)methylideneamino] imidazole-4-carboxamide isomerase (246 aa).

The active-site Proton acceptor is the aspartate 8. The Proton donor role is filled by aspartate 130.

Belongs to the HisA/HisF family.

It localises to the cytoplasm. The enzyme catalyses 1-(5-phospho-beta-D-ribosyl)-5-[(5-phospho-beta-D-ribosylamino)methylideneamino]imidazole-4-carboxamide = 5-[(5-phospho-1-deoxy-D-ribulos-1-ylimino)methylamino]-1-(5-phospho-beta-D-ribosyl)imidazole-4-carboxamide. Its pathway is amino-acid biosynthesis; L-histidine biosynthesis; L-histidine from 5-phospho-alpha-D-ribose 1-diphosphate: step 4/9. The polypeptide is 1-(5-phosphoribosyl)-5-[(5-phosphoribosylamino)methylideneamino] imidazole-4-carboxamide isomerase (Shigella dysenteriae serotype 1 (strain Sd197)).